Consider the following 254-residue polypeptide: Winged helix repair factor 1 (254 aa).

Positions 4–21 (KRHHLIPETFGVKRRRKR) match the Bipartite nuclear localization signal motif. Winged helix domain stretches follow at residues 32-104 (EPGS…GIIF), 120-179 (PYAG…LAVP), and 180-254 (GAGR…LPET).

It belongs to the STK19 family. Monomer in solution. Homodimer; when bound to DNA. Component of a transcription-coupled nucleotide excision repair (TC-NER) complex composed of STK19, ERCC6, ERCC8, DDA1, DDB1, ELOF1 and UVSSA which assembles and interacts with the multiprotein RNA polymerase II complex when it stalls at DNA lesions. In terms of tissue distribution, monocytes, hepatocytes, epithelial cells, T- and B-lymphocytes.

The protein resides in the nucleus. Its subcellular location is the cytoplasm. Its function is as follows. DNA-binding protein which is required for efficient transcription-coupled nucleotide excision repair (TC-NER). Acts as part of a TC-NER complex which assembles and interacts with RNA polymerase II (RNAPII) when it stalls at DNA lesions. TC-NER complex subunit UVSSA binds to the GTF2H1/p62 subunit of the TFIIH transcription factor complex, tethering TFIIH to the TC-NER complex. WHR1/STK19 then interacts with the XPD helicase subunit of TFIIH which guides TFIIH to DNA downstream of the stalled RNAPII, ensuring DNA repair. Directly interacts with RNAPII and also binds to downstream DNA. Promotes the timely removal of DNA damage-stalled RNAPII, allowing downstream NER factors to access DNA lesions. Required for monoubiquitination of UVSSA. Regulates repositioning and stabilization of UVSSA within the TC-NER complex. Stimulates ubiquitination of RNAPII complex member RBP1. Also binds to RNA and regulates the expression levels of many mRNAs. The sequence is that of Winged helix repair factor 1 from Homo sapiens (Human).